Here is a 251-residue protein sequence, read N- to C-terminus: Flap endonuclease Xni (251 aa).

Aspartate 104 contacts Mg(2+). A 5'-3' exonuclease domain is found at valine 160–lysine 250. K(+) is bound by residues leucine 171, alanine 172, proline 180, valine 182, and valine 185. Residues glycine 184–threonine 189 form an interaction with DNA region.

This sequence belongs to the Xni family. Mg(2+) serves as cofactor. It depends on K(+) as a cofactor.

Its function is as follows. Has flap endonuclease activity. During DNA replication, flap endonucleases cleave the 5'-overhanging flap structure that is generated by displacement synthesis when DNA polymerase encounters the 5'-end of a downstream Okazaki fragment. The sequence is that of Flap endonuclease Xni from Yersinia pestis bv. Antiqua (strain Nepal516).